A 422-amino-acid polypeptide reads, in one-letter code: Aliphatic (R)-hydroxynitrile lyase (422 aa).

Positions 63, 85, 115, 118, 121, 129, and 199 each coordinate Zn(2+).

This sequence belongs to the zinc-containing alcohol dehydrogenase family. Homodimer. Zn(2+) is required as a cofactor.

The catalysed reaction is (2R)-2-hydroxy-2-methylbutanenitrile = butan-2-one + hydrogen cyanide. Functionally, involved in the catabolism of cyanogenic glycosides. Naturally occurring substrates are the aliphatic acetone cyanohydrin and butan-2-one cyanohydrin, which are the aglycones of the cyanogenic glycosides linamarin, lotaustralin, linustatin and neolinustatin. Can use various aliphatic ketones and aldehydes as substrates, but not aromatic ketones. The sequence is that of Aliphatic (R)-hydroxynitrile lyase from Linum usitatissimum (Flax).